The primary structure comprises 149 residues: Large ribosomal subunit protein uL24 (149 aa).

This sequence belongs to the universal ribosomal protein uL24 family. As to quaternary structure, part of the 50S ribosomal subunit.

One of two assembly initiator proteins, it binds directly to the 5'-end of the 23S rRNA, where it nucleates assembly of the 50S subunit. Its function is as follows. Located at the polypeptide exit tunnel on the outside of the subunit. This Hyperthermus butylicus (strain DSM 5456 / JCM 9403 / PLM1-5) protein is Large ribosomal subunit protein uL24.